The sequence spans 143 residues: Glutamate-rich protein 4 (143 aa).

Over residues 90 to 106 (LEEEEEDDDEEEQEEEG) the composition is skewed to acidic residues. Positions 90–143 (LEEEEEDDDEEEQEEEGEGKNCVEENKGLQGKQGEKCSGNPYPAQRLPDFEMTI) are disordered. Residues 107–116 (EGKNCVEENK) show a composition bias toward basic and acidic residues.

The polypeptide is Glutamate-rich protein 4 (Erich4) (Rattus norvegicus (Rat)).